The sequence spans 445 residues: Elongation factor 1-alpha (445 aa).

Residues 5-230 enclose the tr-type G domain; sequence KVHISLVVIG…DNLEPPKRPS (226 aa). Residues 14–21 form a G1 region; the sequence is GHVDSGKS. 14–21 serves as a coordination point for GTP; that stretch reads GHVDSGKS. Position 55 is an N6,N6-dimethyllysine (Lys55). The tract at residues 70-74 is G2; it reads CITID. N6,N6,N6-trimethyllysine is present on Lys79. The segment at 91 to 94 is G3; it reads DAPG. Residues 91–95 and 153–156 contribute to the GTP site; these read DAPGH and NKFD. Residues 153 to 156 form a G4 region; the sequence is NKFD. An N6,N6,N6-trimethyllysine modification is found at Lys187. Residues 194–196 are G5; that stretch reads SGW. At Lys261 the chain carries N6-methyllysine. N6,N6,N6-trimethyllysine is present on residues Lys306 and Lys396.

It belongs to the TRAFAC class translation factor GTPase superfamily. Classic translation factor GTPase family. EF-Tu/EF-1A subfamily.

The protein localises to the cytoplasm. Its function is as follows. This protein promotes the GTP-dependent binding of aminoacyl-tRNA to the A-site of ribosomes during protein biosynthesis. The sequence is that of Elongation factor 1-alpha (TEF) from Euglena gracilis.